The sequence spans 387 residues: 1-deoxy-D-xylulose 5-phosphate reductoisomerase (387 aa).

Residues Thr-11, Gly-12, Ser-13, Ile-14, Gly-37, Arg-39, and Asn-123 each contribute to the NADPH site. Lys-124 is a 1-deoxy-D-xylulose 5-phosphate binding site. Position 125 (Glu-125) interacts with NADPH. Position 147 (Asp-147) interacts with Mn(2+). Ser-148, Glu-149, Ser-173, and His-196 together coordinate 1-deoxy-D-xylulose 5-phosphate. Glu-149 contributes to the Mn(2+) binding site. Gly-202 is an NADPH binding site. Positions 209, 214, 215, and 218 each coordinate 1-deoxy-D-xylulose 5-phosphate. Glu-218 contacts Mn(2+).

Belongs to the DXR family. It depends on Mg(2+) as a cofactor. The cofactor is Mn(2+).

The catalysed reaction is 2-C-methyl-D-erythritol 4-phosphate + NADP(+) = 1-deoxy-D-xylulose 5-phosphate + NADPH + H(+). It participates in isoprenoid biosynthesis; isopentenyl diphosphate biosynthesis via DXP pathway; isopentenyl diphosphate from 1-deoxy-D-xylulose 5-phosphate: step 1/6. Functionally, catalyzes the NADPH-dependent rearrangement and reduction of 1-deoxy-D-xylulose-5-phosphate (DXP) to 2-C-methyl-D-erythritol 4-phosphate (MEP). This is 1-deoxy-D-xylulose 5-phosphate reductoisomerase from Corynebacterium diphtheriae (strain ATCC 700971 / NCTC 13129 / Biotype gravis).